The chain runs to 333 residues: 6-phosphogluconolactonase (333 aa).

Belongs to the cycloisomerase 2 family.

The enzyme catalyses 6-phospho-D-glucono-1,5-lactone + H2O = 6-phospho-D-gluconate + H(+). Its pathway is carbohydrate degradation; pentose phosphate pathway; D-ribulose 5-phosphate from D-glucose 6-phosphate (oxidative stage): step 2/3. In terms of biological role, catalyzes the hydrolysis of 6-phosphogluconolactone to 6-phosphogluconate. This chain is 6-phosphogluconolactonase, found in Buchnera aphidicola subsp. Schizaphis graminum (strain Sg).